Reading from the N-terminus, the 204-residue chain is Thymidylate kinase (204 aa).

11 to 18 (GLDKSGKT) provides a ligand contact to ATP.

The protein belongs to the thymidylate kinase family.

The enzyme catalyses dTMP + ATP = dTDP + ADP. It participates in pyrimidine metabolism; dTTP biosynthesis. This chain is Thymidylate kinase (TMK), found in Cowpox virus (strain GRI-90 / Grishak) (CPV).